The chain runs to 253 residues: TCF3 fusion partner (253 aa).

Disordered regions lie at residues 49–72 and 142–211; these read SGGL…GRRR and DEGS…PELA. S167 is subject to Phosphoserine. Residues 170–181 show a composition bias toward pro residues; that stretch reads RRTPAPPEPGSP. Residue T172 is modified to Phosphothreonine. Phosphoserine occurs at positions 180 and 188. T207 carries the post-translational modification Phosphothreonine. Residue K216 forms a Glycyl lysine isopeptide (Lys-Gly) (interchain with G-Cter in SUMO2) linkage. The disordered stretch occupies residues 234–253; sequence VSRGPDKLLPYPTLASPASD. Phosphoserine is present on residues S249 and S252.

As to quaternary structure, interacts with NOL3; translocates NOL3 into the nucleus and negatively regulated TFPT-induced cell death. Component of the chromatin remodeling INO80 complex; specifically part of a complex module associated with the N-terminus of INO80.

The protein localises to the nucleus. Its function is as follows. Appears to promote apoptosis in a p53/TP53-independent manner. Functionally, putative regulatory component of the chromatin remodeling INO80 complex which is involved in transcriptional regulation, DNA replication and probably DNA repair. In Homo sapiens (Human), this protein is TCF3 fusion partner (TFPT).